The chain runs to 209 residues: Large ribosomal subunit protein bL25 (209 aa).

The tract at residues 183-209 (TAGERPAAEPAAAPGAAPAAGPEEAEE) is disordered. Positions 184 to 209 (AGERPAAEPAAAPGAAPAAGPEEAEE) are enriched in low complexity.

Belongs to the bacterial ribosomal protein bL25 family. CTC subfamily. In terms of assembly, part of the 50S ribosomal subunit; part of the 5S rRNA/L5/L18/L25 subcomplex. Contacts the 5S rRNA. Binds to the 5S rRNA independently of L5 and L18.

Functionally, this is one of the proteins that binds to the 5S RNA in the ribosome where it forms part of the central protuberance. The protein is Large ribosomal subunit protein bL25 of Pelotomaculum thermopropionicum (strain DSM 13744 / JCM 10971 / SI).